A 507-amino-acid polypeptide reads, in one-letter code: ATP synthase subunit alpha, plastid (507 aa).

Residue 170–177 (GDRQTGKT) coordinates ATP.

The protein belongs to the ATPase alpha/beta chains family. As to quaternary structure, F-type ATPases have 2 components, CF(1) - the catalytic core - and CF(0) - the membrane proton channel. CF(1) has five subunits: alpha(3), beta(3), gamma(1), delta(1), epsilon(1). CF(0) has four main subunits: a, b, b' and c.

Its subcellular location is the plastid membrane. The catalysed reaction is ATP + H2O + 4 H(+)(in) = ADP + phosphate + 5 H(+)(out). In terms of biological role, produces ATP from ADP in the presence of a proton gradient across the membrane. The alpha chain is a regulatory subunit. This chain is ATP synthase subunit alpha, plastid, found in Aneura mirabilis (Parasitic liverwort).